The following is a 159-amino-acid chain: MKCPFCGGVENKVMDSRVSRDGNAIRRRRECLACGRRFTTYEYIEEMLPTVVKKDGRREPFDRNKIRMGIRKACEKRPISTETIESLVTEVERFCQDYSGEEIRSSMIGEKIMKLLKELDGVAYVRFASVYRQFRDVNDFLEELKEFKQLHDLKKEKEP.

A zinc finger lies at 3–34 (CPFCGGVENKVMDSRVSRDGNAIRRRRECLAC). In terms of domain architecture, ATP-cone spans 49-139 (PTVVKKDGRR…VYRQFRDVND (91 aa)).

This sequence belongs to the NrdR family. Zn(2+) serves as cofactor.

In terms of biological role, negatively regulates transcription of bacterial ribonucleotide reductase nrd genes and operons by binding to NrdR-boxes. This chain is Transcriptional repressor NrdR, found in Syntrophus aciditrophicus (strain SB).